We begin with the raw amino-acid sequence, 229 residues long: MAMSSGTLRISATLVSPYHHHHRNRLSLPSSSSKVDFTGFISNGVNSLETQKCTPGLAISRENTRGQVKVLARNTGDYELSPSPAEQEIESFLYNAINMGFFDRLNLAWKIIFPSHASRRSSNARIAKQRLKMILFSDRCDVSDEAKRKIVNNIIHALSDFVEIESEEKVQLNVSTDGDLGTIYSVTVPVRRVKPEYQDVDEAGTITNVEYKDTRDGSVDVRFDFYVPE.

A chloroplast-targeting transit peptide spans 1–30 (MAMSSGTLRISATLVSPYHHHHRNRLSLPS). The tract at residues 35-141 (VDFTGFISNG…KMILFSDRCD (107 aa)) is interaction with MIND1. The homodimerization stretch occupies residues 142–169 (VSDEAKRKIVNNIIHALSDFVEIESEEK).

This sequence belongs to the MinE family. As to quaternary structure, homodimer. Interacts with MIND1. These interactions are required for proper intraplastidic localization. Binds to ARC3. As to expression, expressed in green tissues, especially at the shoot apex. Also present in leaves, stems, buds, and flowers, especially in sepals, siliques (tip and base), and anthers (mostly in pollen grains).

It localises to the plastid. Its subcellular location is the chloroplast. Functionally, acts as a topological specificity factor during plastid division and specify plastid constriction sites (such as the Z-ring) in a MCD1-dependent manner. Especially involved in epidermal plastids division in a FTSZ1-dependent manner. Required for the proper formation of FtsZ rings at the division site in nongreen plastids (e.g. etioplasts). May contribute to gravitropism in stems and hypocotyls. Stimulates MIND1 ATPase activity. In cooperation with MIND1, prevents FtsZ ring formation anywhere outside of the mid-plastids. The polypeptide is Cell division topological specificity factor homolog, chloroplastic (Arabidopsis thaliana (Mouse-ear cress)).